A 399-amino-acid polypeptide reads, in one-letter code: Phosphoglycerate kinase (399 aa).

Substrate is bound by residues 22–24, arginine 37, 60–63, arginine 119, and arginine 152; these read DLN and HFGR. Residues lysine 202, glutamate 324, and 354–357 each bind ATP; that span reads GGDT.

Belongs to the phosphoglycerate kinase family. Monomer.

The protein localises to the cytoplasm. The catalysed reaction is (2R)-3-phosphoglycerate + ATP = (2R)-3-phospho-glyceroyl phosphate + ADP. It functions in the pathway carbohydrate degradation; glycolysis; pyruvate from D-glyceraldehyde 3-phosphate: step 2/5. The protein is Phosphoglycerate kinase of Sinorhizobium fredii (strain NBRC 101917 / NGR234).